The following is a 405-amino-acid chain: Replication factor C large subunit (405 aa).

ATP is bound at residue 47-54; the sequence is GPPGVGKT.

Belongs to the activator 1 small subunits family. RfcL subfamily. As to quaternary structure, heteromultimer composed of small subunits (RfcS) and large subunits (RfcL).

In terms of biological role, part of the RFC clamp loader complex which loads the PCNA sliding clamp onto DNA. This is Replication factor C large subunit from Saccharolobus islandicus (strain M.16.27) (Sulfolobus islandicus).